The chain runs to 331 residues: Ketol-acid reductoisomerase (NADP(+)) (331 aa).

The KARI N-terminal Rossmann domain maps to 2–182 (AKLFYDSDAD…GGTRAGILET (181 aa)). Residues 25-28 (YGSQ), S51, S53, and 83-86 (DEFQ) each bind NADP(+). H108 is an active-site residue. An NADP(+)-binding site is contributed by G134. One can recognise a KARI C-terminal knotted domain in the interval 183-328 (NFKEETETDL…KTLRSMFSWL (146 aa)). Mg(2+) is bound by residues D191, E195, E227, and E231. Position 252 (S252) interacts with substrate.

Belongs to the ketol-acid reductoisomerase family. Requires Mg(2+) as cofactor.

It catalyses the reaction (2R)-2,3-dihydroxy-3-methylbutanoate + NADP(+) = (2S)-2-acetolactate + NADPH + H(+). It carries out the reaction (2R,3R)-2,3-dihydroxy-3-methylpentanoate + NADP(+) = (S)-2-ethyl-2-hydroxy-3-oxobutanoate + NADPH + H(+). Its pathway is amino-acid biosynthesis; L-isoleucine biosynthesis; L-isoleucine from 2-oxobutanoate: step 2/4. It functions in the pathway amino-acid biosynthesis; L-valine biosynthesis; L-valine from pyruvate: step 2/4. Its function is as follows. Involved in the biosynthesis of branched-chain amino acids (BCAA). Catalyzes an alkyl-migration followed by a ketol-acid reduction of (S)-2-acetolactate (S2AL) to yield (R)-2,3-dihydroxy-isovalerate. In the isomerase reaction, S2AL is rearranged via a Mg-dependent methyl migration to produce 3-hydroxy-3-methyl-2-ketobutyrate (HMKB). In the reductase reaction, this 2-ketoacid undergoes a metal-dependent reduction by NADPH to yield (R)-2,3-dihydroxy-isovalerate. This Prochlorococcus marinus (strain NATL2A) protein is Ketol-acid reductoisomerase (NADP(+)).